The chain runs to 625 residues: Coagulation factor XI (625 aa).

Residues Met-1–Gly-18 form the signal peptide. Apple domains follow at residues Cys-20–Cys-103, Cys-110–Cys-193, Cys-200–Cys-283, and Cys-291–Cys-374. 17 cysteine pairs are disulfide-bonded: Cys-20–Cys-103, Cys-46–Cys-76, Cys-50–Cys-56, Cys-110–Cys-193, Cys-136–Cys-165, Cys-140–Cys-146, Cys-200–Cys-283, Cys-226–Cys-255, Cys-230–Cys-236, Cys-291–Cys-374, Cys-317–Cys-346, Cys-321–Cys-327, Cys-380–Cys-500, Cys-416–Cys-432, Cys-514–Cys-581, Cys-545–Cys-560, and Cys-571–Cys-599. Residues Asn-90 and Asn-126 are each glycosylated (N-linked (GlcNAc...) asparagine). One can recognise a Peptidase S1 domain in the interval Ile-388–Gln-623. The Charge relay system role is filled by His-431. A glycan (N-linked (GlcNAc...) asparagine) is linked at Asn-450. Asp-480 functions as the Charge relay system in the catalytic mechanism. The N-linked (GlcNAc...) asparagine glycan is linked to Asn-491. A heparin-binding site is contributed by Ala-547–Arg-550. Residue Ser-575 is the Charge relay system of the active site.

This sequence belongs to the peptidase S1 family. Plasma kallikrein subfamily. As to quaternary structure, homodimer; disulfide-linked. After activation the heavy and light chains are also linked by a disulfide bond. Interacts (activated) with F9 (inactive and activated) in calcium-dependent manner. Forms a heterodimer with SERPINA5. Post-translationally, activated by factor XIIa (or XII), which cleaves each polypeptide after Arg-387 into the light chain, which contains the active site, and the heavy chain, which associates with high molecular weight (HMW) kininogen. Activated by F12 (activated); the presence of negatively charged surfaces accelerates activation. Activated by F2 (thrombin); the presence of negatively charged surfaces, such as polyphosphate and dextran sulfate, strongly accelerates activation. Autoactivated; the presence of negatively charged surfaces, such as polyphosphate and dextran sulfate, accelerates autoactivation and autolysis. In terms of processing, N-glycosylated on both chains. N-glycosylated sites mainly consist of nonfucosylated sialylated biantennary (in high abundance) and/or triantennary (in low abundance) complex structures.

The protein resides in the secreted. The enzyme catalyses Selective cleavage of Arg-|-Ala and Arg-|-Val bonds in factor IX to form factor IXa.. Its activity is regulated as follows. Inhibited by SERPINA5. Factor XI triggers the middle phase of the intrinsic pathway of blood coagulation by activating factor IX. The chain is Coagulation factor XI (F11) from Bos taurus (Bovine).